The following is a 97-amino-acid chain: Large ribosomal subunit protein uL23 (97 aa).

Belongs to the universal ribosomal protein uL23 family. As to quaternary structure, part of the 50S ribosomal subunit. Contacts protein L29, and trigger factor when it is bound to the ribosome.

One of the early assembly proteins it binds 23S rRNA. One of the proteins that surrounds the polypeptide exit tunnel on the outside of the ribosome. Forms the main docking site for trigger factor binding to the ribosome. The chain is Large ribosomal subunit protein uL23 from Marinobacter nauticus (strain ATCC 700491 / DSM 11845 / VT8) (Marinobacter aquaeolei).